Reading from the N-terminus, the 477-residue chain is Fibrinogen beta chain (477 aa).

Residues Glu1–Lys76 are disordered. Residue Tyr13 is modified to Sulfotyrosine. Asn27 carries an N-linked (GlcNAc...) asparagine glycan. A compositionally biased stretch (basic residues) spans Arg44–Leu55. Cystine bridges form between Cys220/Cys304, Cys230/Cys259, and Cys412/Cys425. In terms of domain architecture, Fibrinogen C-terminal spans Arg221–Trp476.

As to quaternary structure, heterohexamer; disulfide linked. Contains 2 sets of 3 non-identical chains (alpha, beta and gamma). The 2 heterotrimers are in head to head conformation with the N-termini in a small central domain. In terms of processing, conversion of fibrinogen to fibrin is triggered by thrombin, which cleaves fibrinopeptides A and B from alpha and beta chains, and thus exposes the N-terminal polymerization sites responsible for the formation of the soft clot. The soft clot is converted into the hard clot by factor XIIIA which catalyzes the epsilon-(gamma-glutamyl)lysine cross-linking between gamma chains (stronger) and between alpha chains (weaker) of different monomers.

It localises to the secreted. Fibrinogen has a double function: yielding monomers that polymerize into fibrin and acting as a cofactor in platelet aggregation. The sequence is that of Fibrinogen beta chain from Petromyzon marinus (Sea lamprey).